Here is a 720-residue protein sequence, read N- to C-terminus: Catalase-peroxidase (720 aa).

Positions 82–207 form a cross-link, tryptophyl-tyrosyl-methioninium (Trp-Tyr) (with M-233); the sequence is WHSAGTYRTF…LGNTVMGLIY (126 aa). The Proton acceptor role is filled by H83. Residues 207 to 233 constitute a cross-link (tryptophyl-tyrosyl-methioninium (Tyr-Met) (with W-82)); that stretch reads YVNPEGPNGEPDLEGSAKNIRESFGKM. H248 provides a ligand contact to heme b.

Belongs to the peroxidase family. Peroxidase/catalase subfamily. As to quaternary structure, homodimer or homotetramer. It depends on heme b as a cofactor. Formation of the three residue Trp-Tyr-Met cross-link is important for the catalase, but not the peroxidase activity of the enzyme.

The catalysed reaction is H2O2 + AH2 = A + 2 H2O. It carries out the reaction 2 H2O2 = O2 + 2 H2O. In terms of biological role, bifunctional enzyme with both catalase and broad-spectrum peroxidase activity. This chain is Catalase-peroxidase, found in Halobacterium salinarum (strain ATCC 29341 / DSM 671 / R1).